The chain runs to 470 residues: Serine carboxypeptidase ctsa-4.1 (470 aa).

Positions M1–A19 are cleaved as a signal peptide. N-linked (GlcNAc...) asparagine glycosylation is present at N132. The active site involves S169. N316 carries N-linked (GlcNAc...) asparagine glycosylation. D380 is an active-site residue. N396 carries N-linked (GlcNAc...) asparagine glycosylation. H441 is an active-site residue.

The protein belongs to the peptidase S10 family.

It carries out the reaction Release of a C-terminal amino acid with broad specificity.. The chain is Serine carboxypeptidase ctsa-4.1 from Caenorhabditis elegans.